A 98-amino-acid polypeptide reads, in one-letter code: MSLTYMNMLLAFMISLMGLLMYRSHMMSSLLCLEGMMLSLFVMMTVTILNTHMTLASMLPIILLVFAACEAALGLSLLVMVSTTYGMDYVQNLNLLQC.

The next 3 helical transmembrane spans lie at 1-21 (MSLT…GLLM), 29-49 (SLLC…VTIL), and 61-81 (IILL…LVMV).

The protein belongs to the complex I subunit 4L family. Core subunit of respiratory chain NADH dehydrogenase (Complex I) which is composed of 45 different subunits.

It is found in the mitochondrion inner membrane. It carries out the reaction a ubiquinone + NADH + 5 H(+)(in) = a ubiquinol + NAD(+) + 4 H(+)(out). Functionally, core subunit of the mitochondrial membrane respiratory chain NADH dehydrogenase (Complex I) which catalyzes electron transfer from NADH through the respiratory chain, using ubiquinone as an electron acceptor. Part of the enzyme membrane arm which is embedded in the lipid bilayer and involved in proton translocation. This chain is NADH-ubiquinone oxidoreductase chain 4L (MT-ND4L), found in Sturnira lilium (Lesser yellow-shouldered bat).